Reading from the N-terminus, the 275-residue chain is Large ribosomal subunit protein uL2 (275 aa).

2 disordered regions span residues 24 to 48 (LTTD…NAGD) and 224 to 264 (VMNP…NKRT). Residues 31–42 (KPLTKTKQRTGG) are compositionally biased toward basic residues.

This sequence belongs to the universal ribosomal protein uL2 family. As to quaternary structure, part of the 50S ribosomal subunit. Forms a bridge to the 30S subunit in the 70S ribosome.

Its function is as follows. One of the primary rRNA binding proteins. Required for association of the 30S and 50S subunits to form the 70S ribosome, for tRNA binding and peptide bond formation. It has been suggested to have peptidyltransferase activity; this is somewhat controversial. Makes several contacts with the 16S rRNA in the 70S ribosome. The chain is Large ribosomal subunit protein uL2 from Koribacter versatilis (strain Ellin345).